Reading from the N-terminus, the 213-residue chain is Type II restriction enzyme BamHI (213 aa).

Positions 77, 94, 111, and 112 each coordinate Mg(2+). The Proton acceptor role is filled by Glu-113.

Homodimer. Mg(2+) serves as cofactor.

The enzyme catalyses Endonucleolytic cleavage of DNA to give specific double-stranded fragments with terminal 5'-phosphates.. Functionally, a P subtype restriction enzyme that recognizes the double-stranded sequence 5'-GGATCC-3' and cleaves after G-1. This chain is Type II restriction enzyme BamHI, found in Bacillus amyloliquefaciens (Bacillus velezensis).